A 100-amino-acid chain; its full sequence is NADH-quinone oxidoreductase subunit K (100 aa).

The next 3 membrane-spanning stretches (helical) occupy residues 4–24, 29–49, and 60–80; these read YEYYVVLSGLLMVLGLIGIII, IAMLLSTELMLNAVNIAFVAF, and VFVFFILTIAAAEAAVGLGLI.

The protein belongs to the complex I subunit 4L family. NDH-1 is composed of 14 different subunits. Subunits NuoA, H, J, K, L, M, N constitute the membrane sector of the complex.

The protein localises to the cell inner membrane. It catalyses the reaction a quinone + NADH + 5 H(+)(in) = a quinol + NAD(+) + 4 H(+)(out). NDH-1 shuttles electrons from NADH, via FMN and iron-sulfur (Fe-S) centers, to quinones in the respiratory chain. The immediate electron acceptor for the enzyme in this species is believed to be ubiquinone. Couples the redox reaction to proton translocation (for every two electrons transferred, four hydrogen ions are translocated across the cytoplasmic membrane), and thus conserves the redox energy in a proton gradient. The protein is NADH-quinone oxidoreductase subunit K of Persephonella marina (strain DSM 14350 / EX-H1).